We begin with the raw amino-acid sequence, 655 residues long: Putative calcium up-regulated protein J (655 aa).

The Ricin B-type lectin domain occupies 40-181; it reads KSRAMLKGDN…DNVCFQWDLE (142 aa).

Belongs to the cup family.

The protein is Putative calcium up-regulated protein J (cupJ) of Dictyostelium discoideum (Social amoeba).